The sequence spans 520 residues: O-methyltransferase cicE (520 aa).

S-adenosyl-L-methionine-binding positions include 300 to 301, aspartate 323, 355 to 356, and arginine 371; these read GG and NF.

This sequence belongs to the class I-like SAM-binding methyltransferase superfamily. Cation-independent O-methyltransferase family.

It functions in the pathway phytotoxin biosynthesis. Its function is as follows. O-methyltransferase; part of the gene cluster that mediates the biosynthesis of cichorine, a phytotoxin active against knapweed, corn, and soybeans. The first step in the pathway is performed by the non-reducing polyketide synthase pkbA that condenses one acetyl-CoA starter unit with 3 malonyl-CoA units. PkbA also catalyzes one methylation step to produce 3-methylorsellinate. The nonribosomal peptide synthase-like protein cicB, the cytochrome P450 monooxygenase cicH and the O-methyltransferase cicE are involved in the conversion of 3-methylorsellinate into nidulol. CicB converts 3-methylorsellinate to a yet unidentified intermediate, cicH may play a ring-closing role for cichorine and cicE is plausibly responsible for the methylation of one of the phenol groups. The oxidoreductase cicC acts downstream with still unidentified enzymes to further convert nidulol into cichorine. In Emericella nidulans (strain FGSC A4 / ATCC 38163 / CBS 112.46 / NRRL 194 / M139) (Aspergillus nidulans), this protein is O-methyltransferase cicE.